An 88-amino-acid polypeptide reads, in one-letter code: UPF0473 protein CLL_A1177 (88 aa).

Belongs to the UPF0473 family.

The protein is UPF0473 protein CLL_A1177 of Clostridium botulinum (strain Eklund 17B / Type B).